The primary structure comprises 92 residues: Alpha-conotoxin-like Mi20.2 (92 aa).

The N-terminal stretch at 1-24 (MPKLEMMLLVLLILPLSSFSAAGE) is a signal peptide. Positions 25–45 (QVVQGDQRSDGLARYLQRGGR) are excised as a propeptide. 4-carboxyglutamate is present on Glu49. At Pro55 the chain carries 4-hydroxyproline. Cystine bridges form between Cys63–Cys72, Cys68–Cys80, Cys73–Cys90, and Cys78–Cys92.

It belongs to the conotoxin D superfamily. In terms of assembly, hetero-, homo- or pseudo-homodimer (identical sequence, different post-translational modifications). In terms of tissue distribution, expressed by the venom duct.

The protein localises to the secreted. Its function is as follows. Alpha-conotoxins act on postsynaptic membranes, they bind to the nicotinic acetylcholine receptors (nAChR) and thus inhibit them. Through its two C-terminal domains, this homodimeric protein would bind to two nAChR allosteric sites, located outside the nAChR C-loop of the principal binding face and at the adjacent binding interface in a clockwise direction. This toxin specifically blocks mammalian neuronal nAChR of the alpha-7/CHRNA7, alpha-3-beta-2/CHRNA3-CHRNB2 and alpha-4-beta-2/CHRNA4-CHRNB2 subtypes. The sequence is that of Alpha-conotoxin-like Mi20.2 from Conus miles (Soldier cone).